A 284-amino-acid polypeptide reads, in one-letter code: Putative L-ribulose-5-phosphate 3-epimerase UlaE (284 aa).

The protein belongs to the L-ribulose-5-phosphate 3-epimerase family.

The catalysed reaction is L-ribulose 5-phosphate = L-xylulose 5-phosphate. The protein operates within cofactor degradation; L-ascorbate degradation; D-xylulose 5-phosphate from L-ascorbate: step 3/4. Catalyzes the isomerization of L-xylulose-5-phosphate to L-ribulose-5-phosphate. Is involved in the anaerobic L-ascorbate utilization. This Shigella dysenteriae serotype 1 (strain Sd197) protein is Putative L-ribulose-5-phosphate 3-epimerase UlaE.